The primary structure comprises 357 residues: sn-glycerol-3-phosphate import ATP-binding protein UgpC (357 aa).

Residues 4-235 (LKLQAVTKSY…PASLFVASFI (232 aa)) form the ABC transporter domain. Residue 37 to 44 (GPSGCGKS) participates in ATP binding.

It belongs to the ABC transporter superfamily. sn-glycerol-3-phosphate importer (TC 3.A.1.1.3) family. The complex is composed of two ATP-binding proteins (UgpC), two transmembrane proteins (UgpA and UgpE) and a solute-binding protein (UgpB).

Its subcellular location is the cell inner membrane. It catalyses the reaction sn-glycerol 3-phosphate(out) + ATP + H2O = sn-glycerol 3-phosphate(in) + ADP + phosphate + H(+). Its function is as follows. Part of the ABC transporter complex UgpBAEC involved in sn-glycerol-3-phosphate (G3P) import. Responsible for energy coupling to the transport system. The polypeptide is sn-glycerol-3-phosphate import ATP-binding protein UgpC (Yersinia pestis bv. Antiqua (strain Antiqua)).